The following is a 195-amino-acid chain: MARTQQQRREETVARLLQASIDTIIEVGYARASAAVITKRAGVSVGALFRHFETMGDFMAATAYEVLRRQLETFTKQVAEIPADRPALPAALTILRDITAGSTNAVLYELMVAARTDEKLKETLQNVLGQYSAKIHDAARALPGAESFPEETFPVIVALMTNVFDGAAIVRGVLPQPELEEQRIPMLTALLTAGL.

The HTH tetR-type domain occupies 10–70; that stretch reads EETVARLLQA…ATAYEVLRRQ (61 aa). The segment at residues 33-52 is a DNA-binding region (H-T-H motif); it reads SAAVITKRAGVSVGALFRHF.

This is an uncharacterized protein from Mycobacterium tuberculosis (strain CDC 1551 / Oshkosh).